We begin with the raw amino-acid sequence, 66 residues long: Large ribosomal subunit protein uL29 (66 aa).

Belongs to the universal ribosomal protein uL29 family.

This chain is Large ribosomal subunit protein uL29, found in Geobacillus thermodenitrificans (strain NG80-2).